We begin with the raw amino-acid sequence, 333 residues long: MSVRLRQIVEALGGTIEGGGGDVEILRIAPLESAEPGDLAFLSNPRYRQQLAASRAACVIVAPAMREEALARGACIVAEDPYAYFARATQLWKRLHGRTPAAGVHPSAVVDPDAFVDPSAHIGPLCVVERGARIGAGTVLTSRITVGEGCRIGERCLLHPGVVIGADGFGFAAEGGAWTKIEQLGAVRIGDDVEIGANTCIDRGALDDTVIEDGVKLDNLVQIGHNVHIGRHTAVAGCTGVSGSTRIGARCMIGGAAMILGHLEIADGVQVSPGTAITRSVLKPGLYSGMFPFDENAKWEKNAATLRQLHGLRARIMALEEQIRKDGPTAHIQ.

His225 acts as the Proton acceptor in catalysis.

This sequence belongs to the transferase hexapeptide repeat family. LpxD subfamily. Homotrimer.

The catalysed reaction is a UDP-3-O-[(3R)-3-hydroxyacyl]-alpha-D-glucosamine + a (3R)-hydroxyacyl-[ACP] = a UDP-2-N,3-O-bis[(3R)-3-hydroxyacyl]-alpha-D-glucosamine + holo-[ACP] + H(+). It participates in bacterial outer membrane biogenesis; LPS lipid A biosynthesis. Catalyzes the N-acylation of UDP-3-O-acylglucosamine using 3-hydroxyacyl-ACP as the acyl donor. Is involved in the biosynthesis of lipid A, a phosphorylated glycolipid that anchors the lipopolysaccharide to the outer membrane of the cell. The sequence is that of UDP-3-O-acylglucosamine N-acyltransferase from Paracidovorax citrulli (strain AAC00-1) (Acidovorax citrulli).